A 425-amino-acid chain; its full sequence is Kynureninase (425 aa).

Residues Leu105, Thr106, 133–136 (FPSD), Asp218, His221, and Tyr243 contribute to the pyridoxal 5'-phosphate site. The residue at position 244 (Lys244) is an N6-(pyridoxal phosphate)lysine. Pyridoxal 5'-phosphate is bound by residues Trp274 and Asn302.

It belongs to the kynureninase family. Homodimer. Pyridoxal 5'-phosphate serves as cofactor.

The catalysed reaction is L-kynurenine + H2O = anthranilate + L-alanine + H(+). The enzyme catalyses 3-hydroxy-L-kynurenine + H2O = 3-hydroxyanthranilate + L-alanine + H(+). The protein operates within amino-acid degradation; L-kynurenine degradation; L-alanine and anthranilate from L-kynurenine: step 1/1. It participates in cofactor biosynthesis; NAD(+) biosynthesis; quinolinate from L-kynurenine: step 2/3. Catalyzes the cleavage of L-kynurenine (L-Kyn) and L-3-hydroxykynurenine (L-3OHKyn) into anthranilic acid (AA) and 3-hydroxyanthranilic acid (3-OHAA), respectively. This Flavobacterium johnsoniae (strain ATCC 17061 / DSM 2064 / JCM 8514 / BCRC 14874 / CCUG 350202 / NBRC 14942 / NCIMB 11054 / UW101) (Cytophaga johnsonae) protein is Kynureninase.